The following is a 208-amino-acid chain: 2-phospho-L-lactate guanylyltransferase (208 aa).

Belongs to the CofC family. As to quaternary structure, homodimer.

It carries out the reaction (2S)-2-phospholactate + GTP + H(+) = (2S)-lactyl-2-diphospho-5'-guanosine + diphosphate. It participates in cofactor biosynthesis; coenzyme F420 biosynthesis. Its function is as follows. Guanylyltransferase that catalyzes the activation of (2S)-2-phospholactate (2-PL) as (2S)-lactyl-2-diphospho-5'-guanosine, via the condensation of 2-PL with GTP. It is involved in the biosynthesis of coenzyme F420, a hydride carrier cofactor. This Methanosarcina acetivorans (strain ATCC 35395 / DSM 2834 / JCM 12185 / C2A) protein is 2-phospho-L-lactate guanylyltransferase.